Consider the following 450-residue polypeptide: Divalent metal cation transporter MntH (450 aa).

11 helical membrane-spanning segments follow: residues 34–54 (LSFL…GNWI), 61–81 (AQYG…AMLL), 108–128 (IAII…IAEV), 141–161 (IPLI…LFIM), 170–190 (AIVG…VYIS), 212–232 (GILY…NLYL), 263–283 (IQLS…ASLF), 305–325 (PVLG…ALLA), 361–381 (SLAV…AAKI), 383–403 (QLLV…LIPL), and 422–442 (VNII…YLIV).

It belongs to the NRAMP family.

The protein resides in the cell membrane. In terms of biological role, h(+)-stimulated, divalent metal cation uptake system. This is Divalent metal cation transporter MntH from Staphylococcus aureus (strain bovine RF122 / ET3-1).